Here is a 203-residue protein sequence, read N- to C-terminus: Dephospho-CoA kinase (203 aa).

In terms of domain architecture, DPCK spans 3 to 202 (KIGLTGSIGM…MRIAKGDFRN (200 aa)). 11-16 (GMGKST) is an ATP binding site.

It belongs to the CoaE family.

Its subcellular location is the cytoplasm. It catalyses the reaction 3'-dephospho-CoA + ATP = ADP + CoA + H(+). It functions in the pathway cofactor biosynthesis; coenzyme A biosynthesis; CoA from (R)-pantothenate: step 5/5. In terms of biological role, catalyzes the phosphorylation of the 3'-hydroxyl group of dephosphocoenzyme A to form coenzyme A. In Rhizobium etli (strain ATCC 51251 / DSM 11541 / JCM 21823 / NBRC 15573 / CFN 42), this protein is Dephospho-CoA kinase.